Here is a 96-residue protein sequence, read N- to C-terminus: Small ribosomal subunit protein bS6 (96 aa).

It belongs to the bacterial ribosomal protein bS6 family.

In terms of biological role, binds together with bS18 to 16S ribosomal RNA. This Bacillus cereus (strain ATCC 10987 / NRS 248) protein is Small ribosomal subunit protein bS6.